The chain runs to 238 residues: Probable septum site-determining protein MinC (238 aa).

It belongs to the MinC family. In terms of assembly, interacts with MinD and FtsZ.

In terms of biological role, cell division inhibitor that blocks the formation of polar Z ring septums. Rapidly oscillates between the poles of the cell to destabilize FtsZ filaments that have formed before they mature into polar Z rings. Prevents FtsZ polymerization. This chain is Probable septum site-determining protein MinC, found in Xylella fastidiosa (strain M12).